The primary structure comprises 624 residues: Adenine deaminase 1 (624 aa).

The protein belongs to the metallo-dependent hydrolases superfamily. Adenine deaminase family. Requires Mn(2+) as cofactor.

The enzyme catalyses adenine + H2O + H(+) = hypoxanthine + NH4(+). The sequence is that of Adenine deaminase 1 from Bradyrhizobium sp. (strain ORS 278).